Here is a 156-residue protein sequence, read N- to C-terminus: 6,7-dimethyl-8-ribityllumazine synthase (156 aa).

Residues phenylalanine 23, 57 to 59 (AFE), and 81 to 83 (AVI) contribute to the 5-amino-6-(D-ribitylamino)uracil site. 86-87 (ST) contacts (2S)-2-hydroxy-3-oxobutyl phosphate. Residue histidine 89 is the Proton donor of the active site. Phenylalanine 114 contributes to the 5-amino-6-(D-ribitylamino)uracil binding site. Arginine 128 is a (2S)-2-hydroxy-3-oxobutyl phosphate binding site.

The protein belongs to the DMRL synthase family.

It carries out the reaction (2S)-2-hydroxy-3-oxobutyl phosphate + 5-amino-6-(D-ribitylamino)uracil = 6,7-dimethyl-8-(1-D-ribityl)lumazine + phosphate + 2 H2O + H(+). The protein operates within cofactor biosynthesis; riboflavin biosynthesis; riboflavin from 2-hydroxy-3-oxobutyl phosphate and 5-amino-6-(D-ribitylamino)uracil: step 1/2. Functionally, catalyzes the formation of 6,7-dimethyl-8-ribityllumazine by condensation of 5-amino-6-(D-ribitylamino)uracil with 3,4-dihydroxy-2-butanone 4-phosphate. This is the penultimate step in the biosynthesis of riboflavin. This is 6,7-dimethyl-8-ribityllumazine synthase from Campylobacter fetus subsp. fetus (strain 82-40).